The chain runs to 440 residues: Branched-chain amino acid permease BrnQ (440 aa).

12 helical membrane-spanning segments follow: residues 9-29, 46-66, 80-100, 121-141, 149-169, 196-216, 227-247, 284-304, 321-341, 348-368, 378-398, and 414-434; these read YIII…NLIF, AGFL…FVFS, PVFG…FFAI, SPVS…LLSL, IVGK…VAVA, GYLT…VNAL, LIVV…VMYT, ILLG…LITA, IAVV…TQLI, LLTM…HSVF, SLLF…GIKI, and IGLG…ILSI.

The protein belongs to the branched chain amino acid transporter family.

It is found in the cell membrane. Functionally, branched-chain amino acid transport system which is involved in the uptake of isoleucine and valine. Probably does not transport leucine. Together with BcaP and BraB, plays an important role in the activation of CodY, a branched-chain amino acid-responsive transcriptional regulator that controls the expression of several dozen transcription units in B.subtilis. In Bacillus subtilis (strain 168), this protein is Branched-chain amino acid permease BrnQ.